Consider the following 92-residue polypeptide: Phosphoribosyl-ATP pyrophosphatase (92 aa).

The protein belongs to the PRA-PH family.

It is found in the cytoplasm. The enzyme catalyses 1-(5-phospho-beta-D-ribosyl)-ATP + H2O = 1-(5-phospho-beta-D-ribosyl)-5'-AMP + diphosphate + H(+). It participates in amino-acid biosynthesis; L-histidine biosynthesis; L-histidine from 5-phospho-alpha-D-ribose 1-diphosphate: step 2/9. This Leptospira interrogans serogroup Icterohaemorrhagiae serovar copenhageni (strain Fiocruz L1-130) protein is Phosphoribosyl-ATP pyrophosphatase.